The sequence spans 368 residues: RNA polymerase sigma factor SigA (368 aa).

Residues 71–83 (NEKDSSDTDDKIN) are compositionally biased toward basic and acidic residues. The tract at residues 71–90 (NEKDSSDTDDKINPNDLSAP) is disordered. The segment at 135–205 (LAEANLRLVV…TRAIADQART (71 aa)) is sigma-70 factor domain-2. Positions 159-162 (DLIQ) match the Interaction with polymerase core subunit RpoC motif. Residues 214 to 290 (ETINKLIRVQ…DQEAQSPSDH (77 aa)) are sigma-70 factor domain-3. Positions 303-356 (VLDTLTDREENVLRLRFGLDDGRTRTLEEVGKVFGVTRERIRQIEAKALRKLRH) are sigma-70 factor domain-4. Residues 329–348 (LEEVGKVFGVTRERIRQIEA) constitute a DNA-binding region (H-T-H motif).

Belongs to the sigma-70 factor family. RpoD/SigA subfamily. As to quaternary structure, interacts transiently with the RNA polymerase catalytic core.

The protein localises to the cytoplasm. Its function is as follows. Sigma factors are initiation factors that promote the attachment of RNA polymerase to specific initiation sites and are then released. This sigma factor is the primary sigma factor during exponential growth. This chain is RNA polymerase sigma factor SigA, found in Staphylococcus epidermidis (strain ATCC 35984 / DSM 28319 / BCRC 17069 / CCUG 31568 / BM 3577 / RP62A).